We begin with the raw amino-acid sequence, 369 residues long: tRNA 2-selenouridine synthase (369 aa).

A Rhodanese domain is found at 15-138; the sequence is MLSGHPMMDV…MRQYLIEVID (124 aa). Cys-98 (S-selanylcysteine intermediate) is an active-site residue.

This sequence belongs to the SelU family. Monomer.

It carries out the reaction 5-methylaminomethyl-2-thiouridine(34) in tRNA + selenophosphate + (2E)-geranyl diphosphate + H2O + H(+) = 5-methylaminomethyl-2-selenouridine(34) in tRNA + (2E)-thiogeraniol + phosphate + diphosphate. The enzyme catalyses 5-methylaminomethyl-2-thiouridine(34) in tRNA + (2E)-geranyl diphosphate = 5-methylaminomethyl-S-(2E)-geranyl-thiouridine(34) in tRNA + diphosphate. The catalysed reaction is 5-methylaminomethyl-S-(2E)-geranyl-thiouridine(34) in tRNA + selenophosphate + H(+) = 5-methylaminomethyl-2-(Se-phospho)selenouridine(34) in tRNA + (2E)-thiogeraniol. It catalyses the reaction 5-methylaminomethyl-2-(Se-phospho)selenouridine(34) in tRNA + H2O = 5-methylaminomethyl-2-selenouridine(34) in tRNA + phosphate. Involved in the post-transcriptional modification of the uridine at the wobble position (U34) of tRNA(Lys), tRNA(Glu) and tRNA(Gln). Catalyzes the conversion of 2-thiouridine (S2U-RNA) to 2-selenouridine (Se2U-RNA). Acts in a two-step process involving geranylation of 2-thiouridine (S2U) to S-geranyl-2-thiouridine (geS2U) and subsequent selenation of the latter derivative to 2-selenouridine (Se2U) in the tRNA chain. The sequence is that of tRNA 2-selenouridine synthase from Shewanella sediminis (strain HAW-EB3).